A 679-amino-acid polypeptide reads, in one-letter code: Protein polyglycylase TTLL10 (679 aa).

Residues 1-15 (MPLHPPARRPHGHRR) are compositionally biased toward basic residues. Disordered regions lie at residues 1–33 (MPLH…GRLS), 49–77 (GHRA…LMPA), and 96–124 (VSFK…RMGS). The segment covering 18–30 (SEAQTEATTQDTG) has biased composition (polar residues). The span at 96 to 110 (VSFKRPKRSRTHQSH) shows a compositional bias: basic residues. A TTL domain is found at 172–543 (QGPFFYIGGT…TCQKSLHSQK (372 aa)). Residues K304, 310 to 311 (QG), 353 to 356 (QRYV), 366 to 368 (KFD), and 409 to 410 (TN) contribute to the ATP site. Position 310 (Q310) interacts with a protein. Mg(2+)-binding residues include D489, E502, and N504. A disordered region spans residues 605–679 (DRPAARKSMS…EQRSTSHRGS (75 aa)).

It depends on Mg(2+) as a cofactor.

The protein localises to the cytoplasm. It localises to the cytoskeleton. Its subcellular location is the cell projection. The protein resides in the cilium. It is found in the cilium axoneme. The enzyme catalyses (glycyl)(n)-glycyl-L-glutamyl-[protein] + glycine + ATP = (glycyl)(n+1)-glycyl-L-glutamyl-[protein] + ADP + phosphate + H(+). In terms of biological role, polyglycylase which modifies both tubulin and non-tubulin proteins, generating polyglycine side chains of variable lengths on the gamma-carboxyl groups of specific glutamate residues of target proteins. Involved in the elongation step rather than the initiation step of the polyglycylation reaction. Polyglycylates alpha-tubulin and beta-tubulin. Polyglycylates non-tubulin proteins such as nucleosome assembly protein NAP1. In Rattus norvegicus (Rat), this protein is Protein polyglycylase TTLL10.